The primary structure comprises 269 residues: Formamidopyrimidine-DNA glycosylase (269 aa).

The active-site Schiff-base intermediate with DNA is Pro2. The active-site Proton donor is the Glu3. The active-site Proton donor; for beta-elimination activity is Lys57. DNA-binding residues include His90, Arg109, and Lys150. The segment at 235–269 (QVYGRKGEPCRICGMPVVGTKHAQRATFYCRQCQK) adopts an FPG-type zinc-finger fold. Catalysis depends on Arg259, which acts as the Proton donor; for delta-elimination activity.

This sequence belongs to the FPG family. Monomer. It depends on Zn(2+) as a cofactor.

The catalysed reaction is Hydrolysis of DNA containing ring-opened 7-methylguanine residues, releasing 2,6-diamino-4-hydroxy-5-(N-methyl)formamidopyrimidine.. It catalyses the reaction 2'-deoxyribonucleotide-(2'-deoxyribose 5'-phosphate)-2'-deoxyribonucleotide-DNA = a 3'-end 2'-deoxyribonucleotide-(2,3-dehydro-2,3-deoxyribose 5'-phosphate)-DNA + a 5'-end 5'-phospho-2'-deoxyribonucleoside-DNA + H(+). Functionally, involved in base excision repair of DNA damaged by oxidation or by mutagenic agents. Acts as a DNA glycosylase that recognizes and removes damaged bases. Has a preference for oxidized purines, such as 7,8-dihydro-8-oxoguanine (8-oxoG). Has AP (apurinic/apyrimidinic) lyase activity and introduces nicks in the DNA strand. Cleaves the DNA backbone by beta-delta elimination to generate a single-strand break at the site of the removed base with both 3'- and 5'-phosphates. The sequence is that of Formamidopyrimidine-DNA glycosylase from Klebsiella pneumoniae subsp. pneumoniae (strain ATCC 700721 / MGH 78578).